Here is a 266-residue protein sequence, read N- to C-terminus: Probable catechol O-methyltransferase 1 (266 aa).

S-adenosyl-L-methionine-binding residues include Ile-56, Glu-78, Ser-86, Glu-106, Val-107, Ala-135, and Asp-162. Asp-162 serves as a coordination point for Mg(2+). Lys-165 contacts substrate. Positions 190 and 191 each coordinate Mg(2+). Asn-191 contributes to the substrate binding site.

Belongs to the class I-like SAM-binding methyltransferase superfamily. Cation-dependent O-methyltransferase family. It depends on Mg(2+) as a cofactor.

The protein localises to the cytoplasm. The protein resides in the nucleus. The catalysed reaction is a catechol + S-adenosyl-L-methionine = a guaiacol + S-adenosyl-L-homocysteine + H(+). The protein is Probable catechol O-methyltransferase 1 of Schizosaccharomyces pombe (strain 972 / ATCC 24843) (Fission yeast).